We begin with the raw amino-acid sequence, 273 residues long: Putative phosphoenolpyruvate synthase regulatory protein (273 aa).

153-160 (GVSRSGKT) serves as a coordination point for ADP.

The protein belongs to the pyruvate, phosphate/water dikinase regulatory protein family. PSRP subfamily.

It catalyses the reaction [pyruvate, water dikinase] + ADP = [pyruvate, water dikinase]-phosphate + AMP + H(+). It carries out the reaction [pyruvate, water dikinase]-phosphate + phosphate + H(+) = [pyruvate, water dikinase] + diphosphate. In terms of biological role, bifunctional serine/threonine kinase and phosphorylase involved in the regulation of the phosphoenolpyruvate synthase (PEPS) by catalyzing its phosphorylation/dephosphorylation. This chain is Putative phosphoenolpyruvate synthase regulatory protein, found in Paracidovorax citrulli (strain AAC00-1) (Acidovorax citrulli).